A 556-amino-acid chain; its full sequence is Glucose-6-phosphate isomerase (556 aa).

Catalysis depends on Glu-360, which acts as the Proton donor. Catalysis depends on residues His-391 and Lys-519.

Belongs to the GPI family.

It is found in the cytoplasm. It carries out the reaction alpha-D-glucose 6-phosphate = beta-D-fructose 6-phosphate. It participates in carbohydrate biosynthesis; gluconeogenesis. It functions in the pathway carbohydrate degradation; glycolysis; D-glyceraldehyde 3-phosphate and glycerone phosphate from D-glucose: step 2/4. Functionally, catalyzes the reversible isomerization of glucose-6-phosphate to fructose-6-phosphate. This chain is Glucose-6-phosphate isomerase, found in Acinetobacter baumannii (strain AB0057).